The sequence spans 426 residues: DNA polymerase processivity factor component A20 (426 aa).

Belongs to the poxviruses A20 family. As to quaternary structure, interacts with the DNA polymerase catalytic subunit E9. Interacts with UDG. Component of the Uracil-DNA glycosylase(UDG)-A20-polymerase complex; A20 and UDG form a heterodimeric processivity factor that associates with E9 to form the processive polymerase holoenzyme. Interacts with D5.

Its function is as follows. Plays an essential role in viral DNA replication by acting as the polymerase processivity factor together with protein D4. May serve as a bridge which links the DNA polymerase E9 and the uracil DNA glycosylase. The polypeptide is DNA polymerase processivity factor component A20 (Vaccinia virus (strain Ankara) (VACV)).